Here is a 158-residue protein sequence, read N- to C-terminus: UPF0098 protein YbhB (158 aa).

It belongs to the UPF0098 family. As to quaternary structure, homodimer.

Its subcellular location is the cytoplasm. The sequence is that of UPF0098 protein YbhB (ybhB) from Escherichia coli (strain K12).